The following is a 943-amino-acid chain: Lysine-specific demethylase JMJ21 (943 aa).

The F-box domain maps to 14-60 (LGSLSVLPDETICVLLEYLAPRDIAHLACVSSVMYILCNEEPLWMSL). Positions 216-379 (EAAPELLKDY…FVCLDMAPGY (164 aa)) constitute a JmjC domain. Residues histidine 262, aspartate 264, and histidine 347 each contribute to the Fe cation site. Positions 396 to 410 (NSEDLEEETHDEEDN) are enriched in acidic residues. The tract at residues 396 to 438 (NSEDLEEETHDEEDNTLSYSDLTRKEKRTRMNGGGETENREED) is disordered.

This sequence belongs to the JARID1 histone demethylase family. It depends on Fe(2+) as a cofactor. In terms of tissue distribution, mostly expressed in leaves, and, to a lower extent, in inflorescences, roots, siliques and stems.

Its subcellular location is the nucleus. Functionally, may function as histone H3 lysine demethylase and be involved in regulation of gene expression. The sequence is that of Lysine-specific demethylase JMJ21 from Arabidopsis thaliana (Mouse-ear cress).